Consider the following 35-residue polypeptide: Photosystem II reaction center protein T (35 aa).

Residues 3 to 23 (ALVYTFLLVSTLGIIFFAIFF) traverse the membrane as a helical segment.

Belongs to the PsbT family. In terms of assembly, PSII is composed of 1 copy each of membrane proteins PsbA, PsbB, PsbC, PsbD, PsbE, PsbF, PsbH, PsbI, PsbJ, PsbK, PsbL, PsbM, PsbT, PsbY, PsbZ, Psb30/Ycf12, at least 3 peripheral proteins of the oxygen-evolving complex and a large number of cofactors. It forms dimeric complexes.

Its subcellular location is the plastid. The protein localises to the chloroplast thylakoid membrane. Functionally, found at the monomer-monomer interface of the photosystem II (PS II) dimer, plays a role in assembly and dimerization of PSII. PSII is a light-driven water plastoquinone oxidoreductase, using light energy to abstract electrons from H(2)O, generating a proton gradient subsequently used for ATP formation. This is Photosystem II reaction center protein T from Drimys granadensis.